Consider the following 183-residue polypeptide: NADH-ubiquinone oxidoreductase chain 5 (183 aa).

The next 4 membrane-spanning stretches (helical) occupy residues Phe-7–Ser-27, Leu-30–Thr-50, Ala-111–Gly-131, and Thr-144–Ala-164.

This sequence belongs to the complex I subunit 5 family.

The protein resides in the mitochondrion inner membrane. The catalysed reaction is a ubiquinone + NADH + 5 H(+)(in) = a ubiquinol + NAD(+) + 4 H(+)(out). Its function is as follows. Core subunit of the mitochondrial membrane respiratory chain NADH dehydrogenase (Complex I) that is believed to belong to the minimal assembly required for catalysis. Complex I functions in the transfer of electrons from NADH to the respiratory chain. The immediate electron acceptor for the enzyme is believed to be ubiquinone. The sequence is that of NADH-ubiquinone oxidoreductase chain 5 (NDH5) from Pisum sativum (Garden pea).